The primary structure comprises 107 residues: MISGDTILFALMLVTAINVARYVTALRSLIYIMREAHPLLYQQVDGRGFFTTHGNVTKQVRLYHYLKSREYHHHHDPVFTGKCDRVRELFILSGSLLVLTTVVAFML.

Helical transmembrane passes span 6–25 and 89–106; these read TILF…YVTA and LFIL…VAFM.

Belongs to the universal stress protein B family.

It is found in the cell inner membrane. In Vibrio cholerae serotype O1 (strain ATCC 39541 / Classical Ogawa 395 / O395), this protein is Universal stress protein B homolog.